The sequence spans 379 residues: MAPNIRKSHPLLKIINSSLIDLPSPSNISAWWNFGSLLGICLITQILTGLLLAMHYTADTSLAFSSVAHTCRNVQYGWLIRNLHANGASFFFICIYLHIGRGFYYGSYLYKETWNTGVVLLLTLMATAFVGYVLPWGQMSFWGATVITNLFSAIPYIGQTLVEWAWGGFSVDNPTLTRFFALHFLLPFLIAGITLIHLTFLHETGSNNPLGIVSHSDKIPFHPYFSLKDALGFALMFIPLLTLAFFSPNLLGDPENFTPANPLVTPPHIKPEWYFLFAYAILRSIPNKLGGVLALAASVLILFLIPFLHKSKQRSMTFRPLSQILFWLLVANLLILTWIGSQPVEHPFIIIGQMASFSYFLILLVLFPAIGALENKMLY.

A run of 4 helical transmembrane segments spans residues 34 to 54, 78 to 99, 114 to 134, and 179 to 199; these read FGSLLGICLITQILTGLLLAM, WLIRNLHANGASFFFICIYLHI, WNTGVVLLLTLMATAFVGYVL, and FFALHFLLPFLIAGITLIHLT. Residues histidine 84 and histidine 98 each coordinate heme b. Heme b-binding residues include histidine 183 and histidine 197. Histidine 202 is an a ubiquinone binding site. Transmembrane regions (helical) follow at residues 227–247, 289–309, 321–341, and 348–368; these read LKDALGFALMFIPLLTLAFFS, LGGVLALAASVLILFLIPFLH, LSQILFWLLVANLLILTWIGS, and FIIIGQMASFSYFLILLVLFP.

Belongs to the cytochrome b family. The cytochrome bc1 complex contains 11 subunits: 3 respiratory subunits (MT-CYB, CYC1 and UQCRFS1), 2 core proteins (UQCRC1 and UQCRC2) and 6 low-molecular weight proteins (UQCRH/QCR6, UQCRB/QCR7, UQCRQ/QCR8, UQCR10/QCR9, UQCR11/QCR10 and a cleavage product of UQCRFS1). This cytochrome bc1 complex then forms a dimer. Requires heme b as cofactor.

It is found in the mitochondrion inner membrane. Its function is as follows. Component of the ubiquinol-cytochrome c reductase complex (complex III or cytochrome b-c1 complex) that is part of the mitochondrial respiratory chain. The b-c1 complex mediates electron transfer from ubiquinol to cytochrome c. Contributes to the generation of a proton gradient across the mitochondrial membrane that is then used for ATP synthesis. The sequence is that of Cytochrome b (MT-CYB) from Rhea americana (Greater rhea).